A 673-amino-acid chain; its full sequence is Zinc finger and BTB domain-containing protein 16 (673 aa).

The region spanning 34 to 96 (CDVVIMVDSQ…AYTATLQAKA (63 aa)) is the BTB domain. S76, S184, and S197 each carry phosphoserine; by PDPK1. Residues 200–300 (KAAVDSLMTI…SARELHYGRE (101 aa)) form an interaction with RUNX1T1 region. 2 disordered regions span residues 215–236 (QGTLQPPAGPEEPTLAGGGRHP) and 249–332 (DEVP…KHLG). Residue S256 is modified to Phosphoserine; by PDPK1. T282 carries the post-translational modification Phosphothreonine; by PDPK1. Composition is skewed to basic and acidic residues over residues 293–302 (RELHYGREES) and 319–331 (RPEHPAPPPEKHL). 8 consecutive C2H2-type zinc fingers follow at residues 404–426 (EQCSVCGVELPDNEAVEQHRKLH), 432–454 (YGCELCGKRFLDSLRLRMHLLAH), 461–483 (FVCDQCGAQFSKEDALETHRQTH), 490–512 (VFCLLCGKRFQAQSALQQHMEVH), 518–540 (YICSECNRTFPSHTALKRHLRSH), 546–568 (YECEFCGSCFRDESTLKSHKRIH), 574–596 (YECNGCGKKFSLKHQLETHYRVH), and 602–624 (FECKLCHQRSRDYSAMIKHLRTH). S628 is modified (phosphoserine; by PDPK1). The C2H2-type 9 zinc-finger motif lies at 630 to 652 (YQCTICTEYCPSLSSMQKHMKGH).

Belongs to the krueppel C2H2-type zinc-finger protein family. In terms of assembly, binds EPN1. Interacts with ZBTB32 and CUL3. Interacts with ATP7B. Interacts with transcriptional corepressor RUNX1T1 (via its N-terminus); the interaction increases the transcription repression activity of ZBTB16. Interacts (via C2H2-type zinc finger domains 1 and 2) with RNF112. In terms of tissue distribution, within the hematopoietic system, PLZF is expressed in bone marrow, early myeloid cell lines and peripheral blood mononuclear cells. Also expressed in the ovary, and at lower levels, in the kidney and lung.

The protein resides in the nucleus. Its subcellular location is the nuclear body. It functions in the pathway protein modification; protein ubiquitination. Acts as a transcriptional repressor. Transcriptional repression may be mediated through recruitment of histone deacetylases to target promoters. May play a role in myeloid maturation and in the development and/or maintenance of other differentiated tissues. Probable substrate-recognition component of an E3 ubiquitin-protein ligase complex which mediates the ubiquitination and subsequent proteasomal degradation of target proteins. The polypeptide is Zinc finger and BTB domain-containing protein 16 (ZBTB16) (Homo sapiens (Human)).